The sequence spans 100 residues: Small ribosomal subunit protein uS14c (100 aa).

Belongs to the universal ribosomal protein uS14 family. Part of the 30S ribosomal subunit.

It is found in the plastid. The protein localises to the chloroplast. In terms of biological role, binds 16S rRNA, required for the assembly of 30S particles. In Lotus japonicus (Lotus corniculatus var. japonicus), this protein is Small ribosomal subunit protein uS14c.